Consider the following 152-residue polypeptide: Ribosome maturation factor RimP (152 aa).

It belongs to the RimP family.

It is found in the cytoplasm. Functionally, required for maturation of 30S ribosomal subunits. The polypeptide is Ribosome maturation factor RimP (Desulfatibacillum aliphaticivorans).